The sequence spans 1975 residues: Golgi-specific brefeldin A-resistance guanine nucleotide exchange factor 1 homolog (1975 aa).

Disordered regions lie at residues 216-243 and 299-352; these read NPTE…EPEN and ISAG…EEKM. Residues 221–230 show a composition bias toward basic residues; that stretch reads RQKRKKKRQL. Positions 624-812 constitute an SEC7 domain; the sequence is QIIEQKKRKR…ADMYQAIKTE (189 aa). Polar residues predominate over residues 1264–1277; sequence QSLRVGGDQQQQRM. 5 disordered regions span residues 1264–1318, 1447–1473, 1699–1751, 1788–1854, and 1877–1975; these read QSLR…DLES, DEKA…VTED, IKDT…ATAQ, VHSG…QYAY, and YANQ…QEKP. Residues 1291 to 1309 show a composition bias toward basic and acidic residues; sequence GAHEERAYTSEGEERRRGG. A compositionally biased stretch (basic residues) spans 1451-1464; sequence VKKHHHHHHGHKKK. The span at 1734-1751 shows a compositional bias: low complexity; the sequence is SNSTAATSTSDPSIATAQ. The segment covering 1797–1808 has biased composition (pro residues); it reads GSPPQTEPPASS. 2 stretches are compositionally biased toward low complexity: residues 1820 to 1854 and 1877 to 1894; these read YEQY…QYAY and YANQ…QQQH. Over residues 1895 to 1909 the composition is skewed to polar residues; the sequence is PVNPTSPSVHGQYSV. Residues 1938 to 1957 show a composition bias toward low complexity; the sequence is TPPQNNAPALAPSAPTTTSA.

It is found in the golgi apparatus. The protein resides in the cis-Golgi network. Its subcellular location is the endoplasmic reticulum-Golgi intermediate compartment. In terms of biological role, guanine-nucleotide exchange factor (GEF) for members of the Arf family of small GTPases involved in trafficking in the early secretory pathway; its GEF activity initiates the coating of nascent vesicles via the localized generation of activated ARFs through replacement of GDP with GTP. Also, plays a role in receptor-mediated endocytosis in oocytes and endosomal trafficking. Involved in vesicle retrograde transport from the ERGIC and cis-Golgi compartments to the endoplasmic reticulum (ER). Plays a role in maintaining mitochondrial morphology, network organization and function. May be required for the basolateral cell membrane localization of the serine threonine protein kinase sgk-1 in intestinal cells. The protein is Golgi-specific brefeldin A-resistance guanine nucleotide exchange factor 1 homolog of Caenorhabditis elegans.